A 268-amino-acid chain; its full sequence is Tryptophan synthase alpha chain (268 aa).

Catalysis depends on proton acceptor residues E49 and D60.

The protein belongs to the TrpA family. Tetramer of two alpha and two beta chains.

The enzyme catalyses (1S,2R)-1-C-(indol-3-yl)glycerol 3-phosphate + L-serine = D-glyceraldehyde 3-phosphate + L-tryptophan + H2O. The protein operates within amino-acid biosynthesis; L-tryptophan biosynthesis; L-tryptophan from chorismate: step 5/5. The alpha subunit is responsible for the aldol cleavage of indoleglycerol phosphate to indole and glyceraldehyde 3-phosphate. The chain is Tryptophan synthase alpha chain from Xylella fastidiosa (strain M23).